The sequence spans 302 residues: Glycine--tRNA ligase alpha subunit (302 aa).

The protein belongs to the class-II aminoacyl-tRNA synthetase family. As to quaternary structure, tetramer of two alpha and two beta subunits.

The protein localises to the cytoplasm. It catalyses the reaction tRNA(Gly) + glycine + ATP = glycyl-tRNA(Gly) + AMP + diphosphate. The protein is Glycine--tRNA ligase alpha subunit of Haemophilus ducreyi (strain 35000HP / ATCC 700724).